Reading from the N-terminus, the 428-residue chain is Adenylosuccinate synthetase (428 aa).

Residues 12-18 and 40-42 each bind GTP; these read GDEGKGK and GHT. The Proton acceptor role is filled by aspartate 13. 2 residues coordinate Mg(2+): aspartate 13 and glycine 40. IMP is bound by residues 13–16, 38–41, threonine 130, arginine 144, glutamine 225, threonine 240, and arginine 304; these read DEGK and NAGH. The Proton donor role is filled by histidine 41. Position 300 to 306 (300 to 306) interacts with substrate; it reads VTTGRAR. GTP contacts are provided by residues arginine 306, 332–334, and 414–416; these read KID and SVG.

It belongs to the adenylosuccinate synthetase family. As to quaternary structure, homodimer. The cofactor is Mg(2+).

Its subcellular location is the cytoplasm. The catalysed reaction is IMP + L-aspartate + GTP = N(6)-(1,2-dicarboxyethyl)-AMP + GDP + phosphate + 2 H(+). Its pathway is purine metabolism; AMP biosynthesis via de novo pathway; AMP from IMP: step 1/2. In terms of biological role, plays an important role in the de novo pathway of purine nucleotide biosynthesis. Catalyzes the first committed step in the biosynthesis of AMP from IMP. The sequence is that of Adenylosuccinate synthetase from Clostridium botulinum (strain Loch Maree / Type A3).